A 732-amino-acid polypeptide reads, in one-letter code: Protein DIA2 (732 aa).

TPR repeat units lie at residues 15–48 (VLKA…CDSY), 78–111 (IKIL…EPGN), and 113–145 (KCYI…CNND). Residues 204–251 (TDLVGNLPIEILPIIFQRFTTKELVTLSLVCNKWRDKILYHLDCFQEF) enclose the F-box domain. The residue at position 393 (S393) is a Phosphoserine. LRR repeat units lie at residues 425-449 (LEKI…LLRG), 480-505 (FPDL…LLKF), 509-532 (WKNL…DEDQ), 550-574 (LQNL…LCEQ), 579-602 (GRKL…HAHT), 616-637 (LSKL…TMKS), and 645-669 (LENL…EFLK).

This sequence belongs to the DIA2 family. Component of the SCF(DIA2) complex containing CDC53, SKP1, RBX1 and DIA2. Interacts with SKP1.

The protein localises to the nucleus. Functionally, F-box protein component of a SCF (SKP1-CUL1-F-box protein) E3 ubiquitin-protein ligase complex which mediates the ubiquitination and subsequent proteasomal degradation of target proteins. Probably recognizes and binds to phosphorylated target proteins. The SCF(DIA2) complex is specifically involved in the pheromone induced degradation of phosphorylated TEC1. The SCF(DIA2) complex binds to DNA replication origins. Involved in DNA replication, genome stability, and the control of cell cycle, probably through its association to replication origins to facilitate the ubiquitination of another origin-binding protein. Required for invasive growth and growth under alkaline conditions. The sequence is that of Protein DIA2 (DIA2) from Saccharomyces cerevisiae (strain ATCC 204508 / S288c) (Baker's yeast).